The sequence spans 618 residues: MATKHQFQTEITQLLDLMIHSLYSHKEIFLRELISNASDALDKLSYLTLTQENLKTLSFEPRIDISFDEEKKTITIEDNGIGMNENDMKEHLGIIAKSGTKSFLSQLSGDKKKDSALIGQFGVGFYSAFMVAHRVVVQSKKAGEEKAYAWVSEGKGEYEIGECVKESQGTQITLYLREEDAHFASRWEIEGIIHKYSEHIAFPIYLAFVESKFEGEGENKKEIKENKQSQINTAKALWKIPKAELKDTDYKEFYATLSHDNNEPMRWIHTKVEGNLEYTTLFYIPQKAPFDLFRVDYQSGVKLYVKRVFITDDDKELLPPYLRFVRGVIDSEDLPLNVSREILQQNKILANIKSASTKKILSEITNIAKNEADYKTFYEQFGKVLKEGLYGDYENKEKILELLRFDSFKSEYISLKAYKESMGNEQKSIYYMLGENKDALKNAPLLEKFAQKGFDVLLLSDEIDAIVMPMVGEYDKVPLKSINSKEALAELGEESIDEATQNAYEPLIKGFKDALGEQIAEVKLSSLGDAPLTLIKEDNNPMMANLMAQMGQKVPETKPILQLNITHPLFEKLKTAQEDKIKQSALLLFGAALILEGSTLKNAKDFNTELNSLLLQSL.

Residues 1 to 340 are a; substrate-binding; the sequence is MATKHQFQTE…SEDLPLNVSR (340 aa). A b region spans residues 341 to 545; sequence EILQQNKILA…KEDNNPMMAN (205 aa). The segment at 546–618 is c; it reads LMAQMGQKVP…ELNSLLLQSL (73 aa).

It belongs to the heat shock protein 90 family. As to quaternary structure, homodimer.

Its subcellular location is the cytoplasm. Functionally, molecular chaperone. Has ATPase activity. This chain is Chaperone protein HtpG, found in Helicobacter hepaticus (strain ATCC 51449 / 3B1).